Consider the following 130-residue polypeptide: Small ribosomal subunit protein uS11 (130 aa).

This sequence belongs to the universal ribosomal protein uS11 family. Part of the 30S ribosomal subunit. Interacts with proteins S7 and S18. Binds to IF-3.

Its function is as follows. Located on the platform of the 30S subunit, it bridges several disparate RNA helices of the 16S rRNA. Forms part of the Shine-Dalgarno cleft in the 70S ribosome. The chain is Small ribosomal subunit protein uS11 from Gluconacetobacter diazotrophicus (strain ATCC 49037 / DSM 5601 / CCUG 37298 / CIP 103539 / LMG 7603 / PAl5).